The primary structure comprises 342 residues: S-adenosylmethionine:tRNA ribosyltransferase-isomerase (342 aa).

This sequence belongs to the QueA family. In terms of assembly, monomer.

It is found in the cytoplasm. The catalysed reaction is 7-aminomethyl-7-carbaguanosine(34) in tRNA + S-adenosyl-L-methionine = epoxyqueuosine(34) in tRNA + adenine + L-methionine + 2 H(+). The protein operates within tRNA modification; tRNA-queuosine biosynthesis. Its function is as follows. Transfers and isomerizes the ribose moiety from AdoMet to the 7-aminomethyl group of 7-deazaguanine (preQ1-tRNA) to give epoxyqueuosine (oQ-tRNA). This chain is S-adenosylmethionine:tRNA ribosyltransferase-isomerase, found in Oceanobacillus iheyensis (strain DSM 14371 / CIP 107618 / JCM 11309 / KCTC 3954 / HTE831).